A 452-amino-acid chain; its full sequence is Ribosomal protein uS12 methylthiotransferase RimO (452 aa).

In terms of domain architecture, MTTase N-terminal spans 3–118; that stretch reads GKIGFVSLGC…VMQAIHLHLP (116 aa). Residues Cys-12, Cys-48, Cys-77, Cys-149, Cys-153, and Cys-156 each coordinate [4Fe-4S] cluster. The 247-residue stretch at 135 to 381 folds into the Radical SAM core domain; it reads LTPKHYAYLK…MAKAEDISIK (247 aa). The region spanning 384 to 452 is the TRAM domain; the sequence is AKKIGKRVQV…SQGHDLIAET (69 aa).

Belongs to the methylthiotransferase family. RimO subfamily. The cofactor is [4Fe-4S] cluster.

The protein resides in the cytoplasm. The enzyme catalyses L-aspartate(89)-[ribosomal protein uS12]-hydrogen + (sulfur carrier)-SH + AH2 + 2 S-adenosyl-L-methionine = 3-methylsulfanyl-L-aspartate(89)-[ribosomal protein uS12]-hydrogen + (sulfur carrier)-H + 5'-deoxyadenosine + L-methionine + A + S-adenosyl-L-homocysteine + 2 H(+). Functionally, catalyzes the methylthiolation of an aspartic acid residue of ribosomal protein uS12. The polypeptide is Ribosomal protein uS12 methylthiotransferase RimO (Polynucleobacter asymbioticus (strain DSM 18221 / CIP 109841 / QLW-P1DMWA-1) (Polynucleobacter necessarius subsp. asymbioticus)).